A 339-amino-acid polypeptide reads, in one-letter code: Lipopolysaccharide glucosyltransferase WaaO (339 aa).

UDP is bound by residues 34–39 (GTDKNF) and 131–132 (DA). Residues aspartate 131 and aspartate 133 each contribute to the Mg(2+) site. 2 short sequence motifs (DXD) span residues 131 to 133 (DAD) and 220 to 222 (DQD). Histidine 265 contacts Mg(2+). Position 265-271 (265-271 (HYIGPTK)) interacts with UDP.

This sequence belongs to the glycosyltransferase 8 family. Mg(2+) is required as a cofactor.

It catalyses the reaction UDP-glucose + lipopolysaccharide = UDP + alpha-D-glucosyl-lipopolysaccharide.. The enzyme catalyses alpha-D-Gal-(1-&gt;6)-alpha-D-Glc-(1-&gt;3)-[L-alpha-D-Hep-(1-&gt;7)]-4-O-PO3(2-)-L-alpha-D-Hep-(1-&gt;3)-4-O-PO3(2-)-L-alpha-D-Hep-(1-&gt;5)-[alpha-Kdo-(2-&gt;4)]-alpha-Kdo-(2-&gt;6)-lipid A + UDP-alpha-D-glucose = alpha-D-Glc-(1-&gt;3)-[alpha-D-Gal-(1-&gt;6)]-alpha-D-Glc-(1-&gt;3)-[L-alpha-D-Hep-(1-&gt;7)]-4-O-PO3(2-)-L-alpha-D-Hep-(1-&gt;3)-4-O-PO3(2-)-L-alpha-D-Hep-(1-&gt;5)-[alpha-Kdo-(2-&gt;4)]-alpha-Kdo-(2-&gt;6)-lipid A + UDP + H(+). Its pathway is bacterial outer membrane biogenesis; LPS core biosynthesis. In terms of biological role, glucosyltransferase involved in the biosynthesis of the core oligosaccharide region of lipopolysaccharide (LPS). Catalyzes the addition of a second glucose (glucose II) to the first outer-core glucose (glucose I). In vitro, can add multiple glucose residues to its lipid acceptor. Activity does not require the branched galactose added by WaaB, but it is higher in the presence of this branched galactose. In the absence of a lipid acceptor, can hydrolyze UDP-glucose, but not UDP-galactose. The sequence is that of Lipopolysaccharide glucosyltransferase WaaO from Escherichia coli (strain K12).